We begin with the raw amino-acid sequence, 513 residues long: Protein indeterminate-domain 11 (513 aa).

Positions 1 to 84 (MMNKDMLLHQ…QPGNPDPESE (84 aa)) are disordered. Over residues 10-45 (QHQQPQQDENMSNLTSASGDQASVSSGNITEASGSN) the composition is skewed to polar residues. Over residues 51–60 (QQQQEQQQQQ) the composition is skewed to low complexity. Position 89 is a phosphoserine (serine 89). 2 C2H2-type zinc fingers span residues 99–121 (FVCE…RRGH) and 141–171 (YVCP…CRKH). The Nuclear localization signal motif lies at 163–170 (IKKHFCRK). The C2H2-type 2; degenerate zinc-finger motif lies at 176–199 (WKCDKCSKKYAVQSDCKAHSKTCG). 8 residues coordinate Zn(2+): cysteine 178, cysteine 181, histidine 194, cysteine 198, cysteine 205, cysteine 207, histidine 220, and cysteine 224. The CCHC-type 2; atypical zinc-finger motif lies at 203–226 (YRCDCGTLFSRRDSFITHRAFCEA). Residues 213 to 225 (RRDSFITHRAFCE) are SHR-binding. Disordered regions lie at residues 255-280 (ASHP…SHNH) and 334-358 (PQPH…SLFS). Residues 264–280 (TQPTINVSSSSSSSHNH) show a composition bias toward low complexity.

The protein resides in the nucleus. In terms of biological role, probable transcription factor. The protein is Protein indeterminate-domain 11 of Arabidopsis thaliana (Mouse-ear cress).